A 282-amino-acid polypeptide reads, in one-letter code: UPF0759 protein YunF (282 aa).

This sequence belongs to the UPF0759 family.

This chain is UPF0759 protein YunF (yunF), found in Bacillus subtilis (strain 168).